The following is a 601-amino-acid chain: uncharacterized protein (601 aa).

Positions 127 to 364 are disordered; sequence SSLFSSGSPP…PAFANDDTVH (238 aa). Residues 128–137 show a composition bias toward polar residues; it reads SLFSSGSPPD. Over residues 141–154 the composition is skewed to low complexity; that stretch reads RNSTSNLSSVSTNS. Polar residues-rich tracts occupy residues 159–177, 199–213, and 232–250; these read TIGSNYNMLQSTKSTASQR, ALSSPTQGASSNVTP, and SATNEANKLSDIQTSSPSQ. A phosphoserine mark is found at Ser247 and Ser281. Residues 265 to 281 show a composition bias toward low complexity; it reads SLSSSPSSEDSDLSLSS. 2 stretches are compositionally biased toward basic and acidic residues: residues 286–296 and 313–325; these read DEKKQPSKSEK and GSKEQNRIAKEKA. Ser335 carries the phosphoserine modification. Over residues 338-356 the composition is skewed to polar residues; the sequence is DTSTEYDSNSLRRSRSNPA.

This is an uncharacterized protein from Schizosaccharomyces pombe (strain 972 / ATCC 24843) (Fission yeast).